Reading from the N-terminus, the 82-residue chain is Small ribosomal subunit protein bS16 (82 aa).

Belongs to the bacterial ribosomal protein bS16 family.

This is Small ribosomal subunit protein bS16 from Synechococcus elongatus (strain ATCC 33912 / PCC 7942 / FACHB-805) (Anacystis nidulans R2).